Here is a 544-residue protein sequence, read N- to C-terminus: MSAALTETPAWQALQAHFETLHSVHLRDLFAADPGRGERLTAEGAGLYLDYSKHRVTDETLDLLVALAHARGLPERRDAMFGGEKINVTEGRAVLHTALRAPRGSDVLVDGRNVVPDVHEVLERMAAFAQQVRSGSWLGHTGKPIRAIVNIGIGGSDLGPVMAYEALRHYAQRELTVRFVSNVDGTDLVEKTRDLTAEETLFIVSSKTFTTQETMANAQSARAWLLSALGDEAAVARHFVAVSTNAEAVQKFGIDTANMFEFWDWVGGRYSMDSAIGLSLMLAIGPDGFRELLSGFHDMDEHFRTAPLEANLPVLMGLLGVWYNNFFGAETLAVLPYDQYLAYFPAYLQQLDMESNGKHVTLDGQEVTYQTGPVVWGQPGTNGQHAFYQLIHQGTKLIPCDFIAFAQTLNPLPLPGGAPHHDLLMANVFAQTEALAFGKTLEEVLAEGVDAALAPHRVFDGNRPTSTLLVDRLTPRTLGALIALYEHKVFVQGVIWDVNSFDQWGVELGKVLARRIVKELGADEPELSHDSSTNALIRRYRERR.

Catalysis depends on glutamate 354, which acts as the Proton donor. Residues histidine 385 and lysine 510 contribute to the active site.

The protein belongs to the GPI family.

The protein resides in the cytoplasm. It catalyses the reaction alpha-D-glucose 6-phosphate = beta-D-fructose 6-phosphate. Its pathway is carbohydrate biosynthesis; gluconeogenesis. It functions in the pathway carbohydrate degradation; glycolysis; D-glyceraldehyde 3-phosphate and glycerone phosphate from D-glucose: step 2/4. Functionally, catalyzes the reversible isomerization of glucose-6-phosphate to fructose-6-phosphate. This chain is Glucose-6-phosphate isomerase, found in Deinococcus deserti (strain DSM 17065 / CIP 109153 / LMG 22923 / VCD115).